Consider the following 213-residue polypeptide: Large ribosomal subunit protein bL25 (213 aa).

The protein belongs to the bacterial ribosomal protein bL25 family. CTC subfamily. As to quaternary structure, part of the 50S ribosomal subunit; part of the 5S rRNA/L5/L18/L25 subcomplex. Contacts the 5S rRNA. Binds to the 5S rRNA independently of L5 and L18.

Its function is as follows. This is one of the proteins that binds to the 5S RNA in the ribosome where it forms part of the central protuberance. The protein is Large ribosomal subunit protein bL25 of Mesorhizobium japonicum (strain LMG 29417 / CECT 9101 / MAFF 303099) (Mesorhizobium loti (strain MAFF 303099)).